The primary structure comprises 243 residues: DNA repair protein RecO (243 aa).

It belongs to the RecO family.

Functionally, involved in DNA repair and RecF pathway recombination. This is DNA repair protein RecO from Caulobacter vibrioides (strain NA1000 / CB15N) (Caulobacter crescentus).